Consider the following 364-residue polypeptide: MQKKIKVLCVDDSALIRSLMTEIINSQPDMEVCATAPDPLVARELIKQHNPDVLTLDVEMPRMDGLDFLEKLMRLRPMPVVMVSSLTERGSEITLRALELGAVDFVTKPRVGIRDGMLDYSEKLADKVRAASRARVRQNPQPHAAAAAAAHGHAGAAAPLINNPLVSTEKLIIVGASTGGTEAIREVLTPLPPDAPAVLIAQHMPPGFTRSFAQRLNGLCRISVKEAEHGERVLPGHAYIAPGHAHLLLARSGANYIAHLSDEPPVNRHRPSVDVLFRSAAQHAGKNALGVILTGMGRDGAAGLLEMKKAGAYTFAQDEASCVVFGMPREAIAMGGVDDVAPLSDMSRRIMARLASMGDRVQRV.

A Response regulatory domain is found at Lys6–Lys123. The residue at position 57 (Asp57) is a 4-aspartylphosphate. A CheB-type methylesterase domain is found at Leu165 to Met357. Active-site residues include Ser177, His203, and Asp299.

It belongs to the CheB family. In terms of processing, phosphorylated by CheA. Phosphorylation of the N-terminal regulatory domain activates the methylesterase activity.

The protein resides in the cytoplasm. It carries out the reaction [protein]-L-glutamate 5-O-methyl ester + H2O = L-glutamyl-[protein] + methanol + H(+). It catalyses the reaction L-glutaminyl-[protein] + H2O = L-glutamyl-[protein] + NH4(+). Functionally, involved in chemotaxis. Part of a chemotaxis signal transduction system that modulates chemotaxis in response to various stimuli. Catalyzes the demethylation of specific methylglutamate residues introduced into the chemoreceptors (methyl-accepting chemotaxis proteins or MCP) by CheR. Also mediates the irreversible deamidation of specific glutamine residues to glutamic acid. This Burkholderia mallei (strain ATCC 23344) protein is Protein-glutamate methylesterase/protein-glutamine glutaminase 1.